Here is a 621-residue protein sequence, read N- to C-terminus: Chaperone protein HtpG (621 aa).

Residues 1–341 are a; substrate-binding; it reads MSNQEYTFQT…SEDLPLNVSR (341 aa). The tract at residues 342 to 547 is b; it reads EILQQNKILA…GDEPNAMMAN (206 aa). The tract at residues 548 to 621 is c; sequence WMRQMGQSVP…RLNSVLLKAL (74 aa).

It belongs to the heat shock protein 90 family. In terms of assembly, homodimer.

Its subcellular location is the cytoplasm. In terms of biological role, molecular chaperone. Has ATPase activity. The chain is Chaperone protein HtpG from Helicobacter pylori (strain J99 / ATCC 700824) (Campylobacter pylori J99).